Consider the following 715-residue polypeptide: MSTIVLILALLLTSLIAVGLLWWLRFRRPHPITAALPFVKLTHRKLTPEERVSIENYLRNQQNKHGFNTQPAFDSHALAASTSSTPMLVLTPQSDNVYSVTRAITRYGVASDEPNKWRYYLDSIEVHLPSAWEQYITQDNDVELIQTQTIPLVISLNGHTLNNHQSENTYQPILPSVSKNASIRKEDSEHIELLNIRKETPEEYALHGPNGLKEACAICIALLLLFFALSGPTVTLPWLVIVAVSLTCWACWYLFRPLSEKDLREVHCLNGTPKRWGLFGESNQGQINNISLGIVDLIYPAHWGPYFVHDLGKKTHIDIYLNRQVVRQGAFLSLHDEMKMFPLQRWGKNLTLIVGSLLVLVLLLIYVPLGLPLKLSVAWLQGAQSQQVTSVAALDKMPLRIGDMLKAQGNGMCYVPPNIQNTRGFVFTPFDCSGIYWNTASPLPQPESETIEKAAALVETINKQLHPQGSDASVNPKLATAIEKSGMILLDDFSDIVLKTQALCSENTDCIRLKNALVNLGNAKNWSALVKRAQSGNLEGMNVLLRPISADVLENLINTAASSFVYRETHLATEALNSPPPGGFLITSDEGKQLVNHPAPTLPLFDYSALEQWRELQRLSALLLDTPFKAEGIITNITTDANGTRHIALHSEPDIVTLGRYLATSLLLLVLIFCLVVNMVLLIQRAMKNRRRMDNIQRYYDDCFNQTLTPPPFLR.

Helical transmembrane passes span 2-22 (STIVLILALLLTSLIAVGLLW), 214-234 (EACAICIALLLLFFALSGPTV), 235-255 (TLPWLVIVAVSLTCWACWYLF), 349-369 (NLTLIVGSLLVLVLLLIYVPL), and 663-683 (ATSLLLLVLIFCLVVNMVLLI).

The protein belongs to the IgaA family.

The protein resides in the cell inner membrane. The chain is Putative membrane protein IgaA homolog from Yersinia pestis.